The chain runs to 245 residues: Polyhedrin (245 aa).

It belongs to the polyhedrin family.

In terms of biological role, major component of the virus occlusion bodies, which are large proteinaceous structures (polyhedra), that protect the virus from the outside environment for extended periods until they are ingested by insect larvae. The chain is Polyhedrin (PH) from Orgyia pseudotsugata multicapsid polyhedrosis virus (OpMNPV).